The chain runs to 256 residues: Inner membrane transport permease YadH (256 aa).

The Periplasmic portion of the chain corresponds to 1 to 22 (MMHLYWVALKSIWAKEIHRFMR). One can recognise an ABC transmembrane type-2 domain in the interval 22 to 251 (RIWVQTLVPP…LICWSLIQRG (230 aa)). Residues 23-43 (IWVQTLVPPVITMTLYFIIFG) form a helical membrane-spanning segment. The Cytoplasmic segment spans residues 44–52 (NLIGSRIGD). A helical membrane pass occupies residues 53-73 (MHGFSYMQFIVPGLIMMSVIT). Residues 74–94 (NAYANVASSFFGAKFQRNIEE) are Periplasmic-facing. A helical transmembrane segment spans residues 95–115 (LLVAPVPTHVIIAGYVGGGVA). Arginine 116 is a topological domain (cytoplasmic). Residues 117 to 137 (GLFVGILVTAISLFFVPFQVH) traverse the membrane as a helical segment. Serine 138 is a topological domain (periplasmic). The chain crosses the membrane as a helical span at residues 139–159 (WVFVALTLVLTAVLFSLAGLL). Residues 160 to 169 (NGVFAKTFDD) are Cytoplasmic-facing. Residues 170–190 (ISLVPTFVLTPLTYLGGVFYS) form a helical membrane-spanning segment. Residues 191-223 (LTLLPPFWQGLSHLNPIVYMISGFRYGFLGIND) are Periplasmic-facing. A helical membrane pass occupies residues 224–244 (VPLVTTFGVLVVFIVAFYLIC). The Cytoplasmic segment spans residues 245–256 (WSLIQRGRGLRS).

The protein belongs to the ABC-2 integral membrane protein family.

The protein localises to the cell inner membrane. The polypeptide is Inner membrane transport permease YadH (yadH) (Escherichia coli O157:H7).